Consider the following 235-residue polypeptide: 7-cyano-7-deazaguanine synthase (235 aa).

16 to 26 (FSGGQDSTTCL) is an ATP binding site. Zn(2+)-binding residues include C193, C201, C204, and C207.

The protein belongs to the QueC family. The cofactor is Zn(2+).

The catalysed reaction is 7-carboxy-7-deazaguanine + NH4(+) + ATP = 7-cyano-7-deazaguanine + ADP + phosphate + H2O + H(+). It participates in purine metabolism; 7-cyano-7-deazaguanine biosynthesis. Catalyzes the ATP-dependent conversion of 7-carboxy-7-deazaguanine (CDG) to 7-cyano-7-deazaguanine (preQ(0)). This Actinobacillus succinogenes (strain ATCC 55618 / DSM 22257 / CCUG 43843 / 130Z) protein is 7-cyano-7-deazaguanine synthase.